A 206-amino-acid chain; its full sequence is MARYIGPKCKLARREGTDLFLKSARRSLDSKCKIDSAPGQHGAKKPRLSDYGLQLREKQKIRRIYGVLERQFRRYFAEADRRKGSTGELLLQLLESRLDNVVYRMGFGSTRAEARQLVSHKAIVVNGQVVNIPSFQVKAGDVVSVREKAKKQVRIQEALGLATQIGLPGWVSVDADKLEGVFKNMPDRSELTGDINEQLVVEFYSK.

The region spanning 96–157 (SRLDNVVYRM…KAKKQVRIQE (62 aa)) is the S4 RNA-binding domain.

The protein belongs to the universal ribosomal protein uS4 family. As to quaternary structure, part of the 30S ribosomal subunit. Contacts protein S5. The interaction surface between S4 and S5 is involved in control of translational fidelity.

Functionally, one of the primary rRNA binding proteins, it binds directly to 16S rRNA where it nucleates assembly of the body of the 30S subunit. In terms of biological role, with S5 and S12 plays an important role in translational accuracy. The polypeptide is Small ribosomal subunit protein uS4 (Neisseria gonorrhoeae (strain ATCC 700825 / FA 1090)).